We begin with the raw amino-acid sequence, 129 residues long: Large ribosomal subunit protein uL22 (129 aa).

This sequence belongs to the universal ribosomal protein uL22 family. As to quaternary structure, part of the 50S ribosomal subunit.

This protein binds specifically to 23S rRNA; its binding is stimulated by other ribosomal proteins, e.g. L4, L17, and L20. It is important during the early stages of 50S assembly. It makes multiple contacts with different domains of the 23S rRNA in the assembled 50S subunit and ribosome. Its function is as follows. The globular domain of the protein is located near the polypeptide exit tunnel on the outside of the subunit, while an extended beta-hairpin is found that lines the wall of the exit tunnel in the center of the 70S ribosome. The sequence is that of Large ribosomal subunit protein uL22 from Mesorhizobium japonicum (strain LMG 29417 / CECT 9101 / MAFF 303099) (Mesorhizobium loti (strain MAFF 303099)).